Reading from the N-terminus, the 215-residue chain is Adenylate kinase (215 aa).

10–15 (GAGKGT) lines the ATP pocket. The tract at residues 30–59 (STGDMFRAAMKNETEMGKLAKSFIDKGELV) is NMP. Residues Thr31, Arg36, 57 to 59 (ELV), 86 to 89 (GYPR), and Gln93 contribute to the AMP site. The LID stretch occupies residues 127–165 (GRYICRNCGATYHKIFNPTKVEGVCDVCGSHDLYQRADD). An ATP-binding site is contributed by Arg128. Positions 131 and 134 each coordinate Zn(2+). 137–138 (TY) is an ATP binding site. Cys151 and Cys154 together coordinate Zn(2+). Residues Arg162 and Arg173 each contribute to the AMP site. Residue Gln201 participates in ATP binding.

Belongs to the adenylate kinase family. As to quaternary structure, monomer.

It is found in the cytoplasm. It carries out the reaction AMP + ATP = 2 ADP. Its pathway is purine metabolism; AMP biosynthesis via salvage pathway; AMP from ADP: step 1/1. Its function is as follows. Catalyzes the reversible transfer of the terminal phosphate group between ATP and AMP. Plays an important role in cellular energy homeostasis and in adenine nucleotide metabolism. This is Adenylate kinase from Lactococcus lactis subsp. lactis (strain IL1403) (Streptococcus lactis).